Consider the following 415-residue polypeptide: N-succinylarginine dihydrolase (415 aa).

Substrate-binding positions include Ala-18 to Ser-27, Asn-100, and His-127 to Arg-128. Glu-161 is an active-site residue. Arg-193 is a binding site for substrate. The active site involves His-229. 2 residues coordinate substrate: Asp-231 and Asn-340. The active-site Nucleophile is the Cys-346.

Belongs to the succinylarginine dihydrolase family. In terms of assembly, homodimer.

It carries out the reaction N(2)-succinyl-L-arginine + 2 H2O + 2 H(+) = N(2)-succinyl-L-ornithine + 2 NH4(+) + CO2. Its pathway is amino-acid degradation; L-arginine degradation via AST pathway; L-glutamate and succinate from L-arginine: step 2/5. In terms of biological role, catalyzes the hydrolysis of N(2)-succinylarginine into N(2)-succinylornithine, ammonia and CO(2). The sequence is that of N-succinylarginine dihydrolase from Sphingopyxis alaskensis (strain DSM 13593 / LMG 18877 / RB2256) (Sphingomonas alaskensis).